We begin with the raw amino-acid sequence, 1027 residues long: Kinesin heavy chain isoform 5A (1027 aa).

At Ala2 the chain carries N-acetylalanine. Positions 9–327 constitute a Kinesin motor domain; it reads SIKVLCRFRP…LMFGQRAKTI (319 aa). 86–93 serves as a coordination point for ATP; that stretch reads GQTSSGKT. The tract at residues 174–315 is microtubule-binding; sequence VSSPEEILDV…PSSYNDAETK (142 aa). The segment at 271–361 is necessary for interaction with ZFYVE27; it reads EGTKSYVPYR…KTKAQKETIA (91 aa). Residues 331–905 are a coiled coil; it reads ASVNLELTAE…EVDRIKEAVR (575 aa). Residues 353–1027 form an interaction with BICD2 region; sequence TKAQKETIAK…FPLHQETAAS (675 aa). Phosphothreonine is present on Thr397. The disordered stretch occupies residues 906–936; that stretch reads YKSSGKRGHSAQIAKPVRPGHYPASSPTNPY. The tract at residues 907–1027 is globular; sequence KSSGKRGHSA…FPLHQETAAS (121 aa).

It belongs to the TRAFAC class myosin-kinesin ATPase superfamily. Kinesin family. Kinesin subfamily. Oligomer composed of two heavy chains and two light chains. Interacts with GRIP1. Interacts with FMR1 (via C-terminus); this interaction is increased in a mGluR-dependent manner. Interacts with BORCS5. Interacts with ZFYVE27. Interacts with VAPA, VAPB, SURF4, RAB11A (GDP-bound form), RAB11B (GDP-bound form) and RTN3 in a ZFYVE27-dependent manner. Interacts with BICD2. Interacts with DTNB. Expressed in brain.

The protein localises to the cytoplasm. The protein resides in the perinuclear region. It localises to the cytoskeleton. It is found in the perikaryon. The catalysed reaction is ATP + H2O + a kinesin associated with a microtubule at position (n) = ADP + phosphate a kinesin associated with a microtubule at position (n+1, toward the plus end).. Microtubule-dependent motor required for slow axonal transport of neurofilament proteins (NFH, NFM and NFL). Can induce formation of neurite-like membrane protrusions in non-neuronal cells in a ZFYVE27-dependent manner. The ZFYVE27-KIF5A complex contributes to the vesicular transport of VAPA, VAPB, SURF4, RAB11A, RAB11B and RTN3 proteins in neurons. Required for anterograde axonal transportation of MAPK8IP3/JIP3 which is essential for MAPK8IP3/JIP3 function in axon elongation. This is Kinesin heavy chain isoform 5A from Rattus norvegicus (Rat).